Consider the following 856-residue polypeptide: DNA mismatch repair protein MutS (856 aa).

623–630 (GPNMSGKS) is a binding site for ATP.

Belongs to the DNA mismatch repair MutS family.

Functionally, this protein is involved in the repair of mismatches in DNA. It is possible that it carries out the mismatch recognition step. This protein has a weak ATPase activity. The sequence is that of DNA mismatch repair protein MutS from Natronomonas pharaonis (strain ATCC 35678 / DSM 2160 / CIP 103997 / JCM 8858 / NBRC 14720 / NCIMB 2260 / Gabara) (Halobacterium pharaonis).